Here is a 389-residue protein sequence, read N- to C-terminus: Alpha-(1,3)-fucosyltransferase 7 (389 aa).

The Cytoplasmic segment spans residues 1 to 55; it reads MPTPCPPACLSTPGTHRLLPFPDWKAPSWESRKEATCNSSSPGPWAEPTVQGYHP. The chain crosses the membrane as a helical; Signal-anchor for type II membrane protein span at residues 56 to 78; the sequence is TRRLRAWGGLAGGATFMVIWFFW. At 79 to 389 the chain is on the lumenal side; the sequence is LWGSAPGSAP…YEDLESWFQA (311 aa). Cysteine 115 and cysteine 123 are joined by a disulfide. Asparagine 128 is a glycosylation site (N-linked (GlcNAc...) asparagine). A disulfide bridge links cysteine 258 with cysteine 261. Residue asparagine 338 is glycosylated (N-linked (GlcNAc...) asparagine). Cysteine 365 and cysteine 368 are disulfide-bonded.

The protein belongs to the glycosyltransferase 10 family. N-glycosylated. As to expression, highly expressed in lung and bone marrow and to a much lesser extent in spleen, salivary gland and skeletal muscle.

Its subcellular location is the golgi apparatus. The protein localises to the golgi stack membrane. The catalysed reaction is an N-acetyl-alpha-neuraminyl-(2-&gt;3)-beta-D-galactosyl-(1-&gt;4)-N-acetyl-beta-D-glucosaminyl derivative + GDP-beta-L-fucose = an alpha-Neu5Ac-(2-&gt;3)-beta-D-Gal-(1-&gt;4)-[alpha-L-Fuc-(1-&gt;3)]-beta-D-GlcNAc derivative + GDP + H(+). The enzyme catalyses an alpha-Neu5Ac-(2-&gt;3)-beta-D-Gal-(1-&gt;4)-beta-D-GlcNAc6S derivative + GDP-beta-L-fucose = an alpha-Neu5Ac-(2-&gt;3)-beta-D-Gal-(1-&gt;4)-[alpha-L-Fuc-(1-&gt;3)]-beta-D-GlcNAc6S derivative + GDP + H(+). It carries out the reaction a neolactoside IV(3)-alpha-NeuAc-nLc4Cer + GDP-beta-L-fucose = a neolactoside IV(3)-alpha-NeuNAc,III(3)-alpha-Fuc-nLc4Cer + GDP + H(+). It catalyses the reaction a neolactoside VI(3)-alpha-NeuNAc-nLc6Cer + GDP-beta-L-fucose = a neolactoside VI(3)-alpha-NeuAc,V(3)-alphaFuc-nLc6Cer + GDP + H(+). The catalysed reaction is an alpha-Neu5Ac-(2-&gt;3)-beta-D-Gal-(1-&gt;4)-beta-D-GlcNAc-(1-&gt;3)-beta-D-Gal-(1-&gt;4)-[alpha-L-Fuc-(1-&gt;3)]-beta-D-GlcNAc derivative + GDP-beta-L-fucose = an alpha-Neu5Ac-(2-&gt;3)-beta-D-Gal-(1-&gt;4)-[alpha-L-Fuc-(1-&gt;3)]-beta-D-GlcNAc-(1-&gt;3)-beta-D-Gal-(1-&gt;4)-[alpha-L-Fuc-(1-&gt;3)]-beta-D-GlcNAc derivative + GDP + H(+). The enzyme catalyses alpha-Neu5Ac-(2-&gt;3)-beta-D-Gal-(1-&gt;4)-beta-D-GlcNAc-(1-&gt;3)-beta-D-Gal-(1-&gt;4)-D-Glc + GDP-beta-L-fucose = alpha-Neu5Ac-(2-&gt;3)-beta-D-Gal-(1-&gt;4)-[alpha-L-Fuc-(1-&gt;3)]-beta-D-GlcNAc-(1-&gt;3)-beta-D-Gal-(1-&gt;4)-D-Glc + GDP + H(+). It carries out the reaction alpha-Neu5Ac-(2-&gt;3)-beta-D-Gal-(1-&gt;4)-beta-D-GlcNAc-(1-&gt;3)-beta-D-Gal-(1-&gt;4)-[alpha-L-Fuc-(1-&gt;3)]-beta-D-GlcNAc-(1-&gt;3)-beta-D-Gal-(1-&gt;4)-beta-D-GlcNAc + GDP-beta-L-fucose = alpha-Neu5Ac-(2-&gt;3)-beta-D-Gal-(1-&gt;4)-[alpha-L-Fuc-(1-&gt;3)]-beta-D-GlcNAc-(1-&gt;3)-beta-D-Gal-(1-&gt;4)-[alpha-L-Fuc-(1-&gt;3)]-beta-D-GlcNAc-(1-&gt;3)-beta-D-Gal-(1-&gt;4)-beta-D-GlcNAc + GDP + H(+). It catalyses the reaction alpha-Neu5Ac-(2-&gt;3)-beta-D-Gal-(1-&gt;4)-beta-D-GlcNAc-(1-&gt;3)-beta-D-Gal-(1-&gt;4)-beta-D-GlcNAc-(1-&gt;3)-beta-D-Gal-(1-&gt;4)-beta-D-GlcNAc + GDP-beta-L-fucose = alpha-Neu5Ac-(2-&gt;3)-beta-D-Gal-(1-&gt;4)-[alpha-L-Fuc-(1-&gt;3)]-beta-D-GlcNAc-(1-&gt;3)-beta-D-Gal-(1-&gt;4)-beta-D-GlcNAc-(1-&gt;3)-beta-D-Gal-(1-&gt;4)-beta-D-GlcNAc + GDP + H(+). The protein operates within protein modification; protein glycosylation. Inhibited by NaCl. Inhibited by GDP in a concentration dependent manner, with an IC(50) value of 93 uM. Also inhibited by GMP and GTP. Inhibited by N-ethylmaleimide. Activated by poly(ethylene glycol) by enhancing the thermal stability of FUT7. Activated by Mn2+, Ca2+, and Mg2+. Both panosialin A and B inhibit activity with IC(50) values of 4.8 and 5.3 ug/ml, respectively. Inhibited by gallic acid (GA) and (-)-epigallocatechin gallate (EGCG) in a time-dependent and irreversible manner with IC(50) values of 60 and 700 nM, respectively. In terms of biological role, catalyzes the transfer of L-fucose, from a guanosine diphosphate-beta-L-fucose, to the N-acetyl glucosamine (GlcNAc) of a distal alpha2,3 sialylated lactosamine unit of a glycoprotein or a glycolipid-linked sialopolylactosamines chain through an alpha-1,3 glycosidic linkage and participates in the final fucosylation step in the biosynthesis of the sialyl Lewis X (sLe(x)), a carbohydrate involved in cell and matrix adhesion during leukocyte trafficking and fertilization. In vitro, also synthesizes sialyl-dimeric-Lex structures, from VIM-2 structures and both di-fucosylated and trifucosylated structures from mono-fucosylated precursors. However does not catalyze alpha 1-3 fucosylation when an internal alpha 1-3 fucosylation is present in polylactosamine chain and the fucosylation rate of the internal GlcNAc residues is reduced once fucose has been added to the distal GlcNAc. Also catalyzes the transfer of a fucose from GDP-beta-fucose to the 6-sulfated a(2,3)sialylated substrate to produce 6-sulfo sLex mediating significant L-selectin-dependent cell adhesion. Through sialyl-Lewis(x) biosynthesis, can control SELE- and SELP-mediated cell adhesion with leukocytes and allows leukocytes tethering and rolling along the endothelial tissue thereby enabling the leukocytes to accumulate at a site of inflammation. May enhance embryo implantation through sialyl Lewis X (sLeX)-mediated adhesion of embryo cells to endometrium. May affect insulin signaling by up-regulating the phosphorylation and expression of some signaling molecules involved in the insulin-signaling pathway through SLe(x) which is present on the glycans of the INSRR alpha subunit. This is Alpha-(1,3)-fucosyltransferase 7 from Mus musculus (Mouse).